The primary structure comprises 259 residues: Hydroxyacylglutathione hydrolase (259 aa).

Zn(2+)-binding residues include His-56, His-58, Asp-60, His-61, His-112, Asp-133, and His-171. Positions 224–238 are enriched in basic and acidic residues; that stretch reads RTRETSVKEKADERS. The segment at 224–245 is disordered; the sequence is RTRETSVKEKADERSSGQNTSQ.

Belongs to the metallo-beta-lactamase superfamily. Glyoxalase II family. In terms of assembly, monomer. Zn(2+) is required as a cofactor.

The catalysed reaction is an S-(2-hydroxyacyl)glutathione + H2O = a 2-hydroxy carboxylate + glutathione + H(+). It participates in secondary metabolite metabolism; methylglyoxal degradation; (R)-lactate from methylglyoxal: step 2/2. Thiolesterase that catalyzes the hydrolysis of S-D-lactoyl-glutathione to form glutathione and D-lactic acid. This Pseudomonas savastanoi pv. phaseolicola (strain 1448A / Race 6) (Pseudomonas syringae pv. phaseolicola (strain 1448A / Race 6)) protein is Hydroxyacylglutathione hydrolase.